Reading from the N-terminus, the 853-residue chain is DNA mismatch repair protein MutS (853 aa).

614-621 is an ATP binding site; the sequence is GPNMGGKS.

It belongs to the DNA mismatch repair MutS family.

Its function is as follows. This protein is involved in the repair of mismatches in DNA. It is possible that it carries out the mismatch recognition step. This protein has a weak ATPase activity. This chain is DNA mismatch repair protein MutS, found in Escherichia fergusonii (strain ATCC 35469 / DSM 13698 / CCUG 18766 / IAM 14443 / JCM 21226 / LMG 7866 / NBRC 102419 / NCTC 12128 / CDC 0568-73).